Here is a 360-residue protein sequence, read N- to C-terminus: Aminomethyltransferase (360 aa).

The protein belongs to the GcvT family. The glycine cleavage system is composed of four proteins: P, T, L and H.

It catalyses the reaction N(6)-[(R)-S(8)-aminomethyldihydrolipoyl]-L-lysyl-[protein] + (6S)-5,6,7,8-tetrahydrofolate = N(6)-[(R)-dihydrolipoyl]-L-lysyl-[protein] + (6R)-5,10-methylene-5,6,7,8-tetrahydrofolate + NH4(+). Functionally, the glycine cleavage system catalyzes the degradation of glycine. The polypeptide is Aminomethyltransferase (Pseudomonas aeruginosa (strain ATCC 15692 / DSM 22644 / CIP 104116 / JCM 14847 / LMG 12228 / 1C / PRS 101 / PAO1)).